A 529-amino-acid chain; its full sequence is Probable feruloyl esterase B-1 (529 aa).

A signal peptide spans 1 to 19; that stretch reads MKISYFFVASLSYVSVARA. 2 cysteine pairs are disulfide-bonded: Cys27/Cys75 and Cys63/Cys114. Residues Asn53, Asn64, Asn85, Asn98, and Asn138 are each glycosylated (N-linked (GlcNAc...) asparagine). 4 disulfide bridges follow: Cys187–Cys445, Cys256–Cys273, Cys282–Cys295, and Cys505–Cys527. Ser188 acts as the Acyl-ester intermediate in catalysis. N-linked (GlcNAc...) asparagine glycosylation is present at Asn233. Ca(2+) contacts are provided by Asp257, Asp260, Ala262, Asp264, and Leu266. Asn286, Asn290, and Asn354 each carry an N-linked (GlcNAc...) asparagine glycan. Active-site charge relay system residues include Asp404 and His444.

It belongs to the tannase family.

Its subcellular location is the secreted. It catalyses the reaction feruloyl-polysaccharide + H2O = ferulate + polysaccharide.. In terms of biological role, involved in degradation of plant cell walls. Hydrolyzes the feruloyl-arabinose ester bond in arabinoxylans as well as the feruloyl-galactose and feruloyl-arabinose ester bonds in pectin. This Aspergillus terreus (strain NIH 2624 / FGSC A1156) protein is Probable feruloyl esterase B-1 (faeB-1).